The chain runs to 595 residues: Proline--tRNA ligase (595 aa).

The segment at 1 to 22 is disordered; that stretch reads MKMSTMFGATLHTAPGRSESEG.

This sequence belongs to the class-II aminoacyl-tRNA synthetase family. ProS type 1 subfamily. As to quaternary structure, homodimer.

It localises to the cytoplasm. The catalysed reaction is tRNA(Pro) + L-proline + ATP = L-prolyl-tRNA(Pro) + AMP + diphosphate. Its function is as follows. Catalyzes the attachment of proline to tRNA(Pro) in a two-step reaction: proline is first activated by ATP to form Pro-AMP and then transferred to the acceptor end of tRNA(Pro). As ProRS can inadvertently accommodate and process non-cognate amino acids such as alanine and cysteine, to avoid such errors it has two additional distinct editing activities against alanine. One activity is designated as 'pretransfer' editing and involves the tRNA(Pro)-independent hydrolysis of activated Ala-AMP. The other activity is designated 'posttransfer' editing and involves deacylation of mischarged Ala-tRNA(Pro). The misacylated Cys-tRNA(Pro) is not edited by ProRS. The sequence is that of Proline--tRNA ligase from Salinispora tropica (strain ATCC BAA-916 / DSM 44818 / JCM 13857 / NBRC 105044 / CNB-440).